The following is a 382-amino-acid chain: MGDWSALGKLLDKVQAYSTAGGKVWLSVLFIFRILLLGTAVESAWGDEQSAFRCNTQQPGCENVCYDKSFPISHVRFWVLQIIFVSVPTLLYLAHVFYVMRKEEKLNKKEEELKVAQTDGVNVEMHLKQIEIKKFKYGIEEHGKVKMRGGLLRTYIISILFKSIFEVAFLLIQWYIYGFSLSAVYTCKRDPCPHQVDCFLSRPTEKTIFIIFMLVVSLVSLALNIIELFYVFFKGVKDRVKGKSDPYHTTSGALSPTKDCGSQKYAYFNGCSSPTAPLSPMSPPGYKLVTGDRNNSSCRNYNKQASEQNWANYSAEQNRMGQAGSTISNSHAQPFDFPDDNQNSKKLAAGHELQPLAIVDQRPSSRASSRASSRPRPDDLEI.

Residues 2-23 are Cytoplasmic-facing; it reads GDWSALGKLLDKVQAYSTAGGK. S5 carries the phosphoserine modification. A helical membrane pass occupies residues 24-44; that stretch reads VWLSVLFIFRILLLGTAVESA. Residues 45 to 76 are Extracellular-facing; it reads WGDEQSAFRCNTQQPGCENVCYDKSFPISHVR. 2 cysteine pairs are disulfide-bonded: C54-C192 and C187-C198. The helical transmembrane segment at 77–97 threads the bilayer; the sequence is FWVLQIIFVSVPTLLYLAHVF. Over 98-155 the chain is Cytoplasmic; it reads YVMRKEEKLNKKEEELKVAQTDGVNVEMHLKQIEIKKFKYGIEEHGKVKMRGGLLRTY. K144 participates in a covalent cross-link: Glycyl lysine isopeptide (Lys-Gly) (interchain with G-Cter in SUMO). Residues 156–176 traverse the membrane as a helical segment; that stretch reads IISILFKSIFEVAFLLIQWYI. Residues 177–207 are Extracellular-facing; it reads YGFSLSAVYTCKRDPCPHQVDCFLSRPTEKT. The chain crosses the membrane as a helical span at residues 208–228; sequence IFIIFMLVVSLVSLALNIIEL. At 229–382 the chain is on the cytoplasmic side; that stretch reads FYVFFKGVKD…SRPRPDDLEI (154 aa). K237 is covalently cross-linked (Glycyl lysine isopeptide (Lys-Gly) (interchain with G-Cter in SUMO)). The interval 244–382 is interaction with NOV; sequence SDPYHTTSGA…SRPRPDDLEI (139 aa). The residue at position 247 (Y247) is a Phosphotyrosine. S255 and S262 each carry phosphoserine. The segment at 264-382 is interaction with UBQLN4; it reads KYAYFNGCSS…SRPRPDDLEI (119 aa). C271 is subject to S-nitrosocysteine. T275 is subject to Phosphothreonine. Phosphoserine occurs at positions 306 and 314. Polar residues predominate over residues 317 to 332; it reads QNRMGQAGSTISNSHA. The tract at residues 317–382 is disordered; the sequence is QNRMGQAGST…SRPRPDDLEI (66 aa). S325 bears the Phosphoserine; by CK1 mark. T326 is subject to Phosphothreonine. S328 and S330 each carry phosphoserine; by CK1. Phosphoserine occurs at positions 344 and 365. The segment covering 362 to 374 has biased composition (low complexity); sequence RPSSRASSRASSR. S368 is subject to Phosphoserine; by PKC/PRKCG and PKC/PRKCD. 2 positions are modified to phosphoserine: S369 and S373.

Belongs to the connexin family. Alpha-type (group II) subfamily. As to quaternary structure, a connexon is composed of a hexamer of connexins. Interacts with SGSM3. Interacts with RIC1/CIP150. Interacts with CNST and CSNK1D. Interacts (via C-terminus) with TJP1. Interacts (via C-terminus) with SRC (via SH3 domain). Interacts (not ubiquitinated) with UBQLN4 (via UBA domain). Interacts with NOV. Interacts with TMEM65. Interacts with ANK3/ANKG and PKP2. Post-translationally, phosphorylation at Ser-325, Ser-328 and Ser-330 by CK1 modulates gap junction assembly. Phosphorylated at Ser-368 by PRKCG; phosphorylation induces disassembly of gap junction plaques and inhibition of gap junction activity. Phosphorylation at Ser-368 by PRKCD triggers its internalization into small vesicles leading to proteasome-mediated degradation. In terms of processing, sumoylated with SUMO1, SUMO2 and SUMO3, which may regulate the level of functional Cx43 gap junctions at the plasma membrane. May be desumoylated by SENP1 or SENP2. S-nitrosylation at Cys-271 is enriched at the muscle endothelial gap junction in arteries, it augments channel permeability and may regulate of smooth muscle cell to endothelial cell communication. Post-translationally, acetylated in the developing cortex; leading to delocalization from the cell membrane.

The protein localises to the cell membrane. Its subcellular location is the cell junction. It localises to the gap junction. The protein resides in the endoplasmic reticulum. Its function is as follows. Gap junction protein that acts as a regulator of bladder capacity. A gap junction consists of a cluster of closely packed pairs of transmembrane channels, the connexons, through which materials of low MW diffuse from one cell to a neighboring cell. May play a critical role in the physiology of hearing by participating in the recycling of potassium to the cochlear endolymph. Negative regulator of bladder functional capacity: acts by enhancing intercellular electrical and chemical transmission, thus sensitizing bladder muscles to cholinergic neural stimuli and causing them to contract. May play a role in cell growth inhibition through the regulation of NOV expression and localization. Plays an essential role in gap junction communication in the ventricles. This chain is Gap junction alpha-1 protein (GJA1), found in Chlorocebus aethiops (Green monkey).